Reading from the N-terminus, the 99-residue chain is Cysteine-rich C-terminal protein 1 (99 aa).

Disordered regions lie at residues 1-42 (MSSQ…CCGS) and 65-99 (RRRRRQRSSGCCCCGGGSQRSQRSNNRSSGCCSGC). The segment covering 22 to 32 (APCPAPAPTPA) has biased composition (pro residues). Over residues 83 to 99 (QRSQRSNNRSSGCCSGC) the composition is skewed to low complexity.

The chain is Cysteine-rich C-terminal protein 1 (CRCT1) from Homo sapiens (Human).